The primary structure comprises 617 residues: Serine/threonine-protein phosphatase 2A activator 1 (617 aa).

A compositionally biased stretch (pro residues) spans 1 to 11 (MDPTSKRPPPA). 5 disordered regions span residues 1-25 (MDPT…PKLE), 84-169 (VSTS…ESES), 230-261 (GAGG…TNEQ), 376-398 (SSPN…SDIT), and 572-617 (RFTP…PWTK). The span at 84–93 (VSTSEPTTDG) shows a compositional bias: polar residues. Low complexity predominate over residues 94–104 (QQQQQQQQQRQ). The span at 239-252 (EEGTETETETETEG) shows a compositional bias: acidic residues.

This sequence belongs to the PTPA-type PPIase family.

The protein localises to the cytoplasm. It is found in the nucleus. The catalysed reaction is [protein]-peptidylproline (omega=180) = [protein]-peptidylproline (omega=0). PPIases accelerate the folding of proteins. It catalyzes the cis-trans isomerization of proline imidic peptide bonds in oligopeptides. Acts as a regulatory subunit for PP2A-like phosphatases modulating their activity or substrate specificity, probably by inducing a conformational change in the catalytic subunit, a direct target of the PPIase. Can reactivate inactive phosphatase PP2A-phosphatase methylesterase complexes (PP2Ai) in presence of ATP and Mg(2+) by dissociating the inactive form from the complex. The sequence is that of Serine/threonine-protein phosphatase 2A activator 1 (rrd-1) from Neurospora crassa (strain ATCC 24698 / 74-OR23-1A / CBS 708.71 / DSM 1257 / FGSC 987).